Reading from the N-terminus, the 330-residue chain is Ketol-acid reductoisomerase (NADP(+)) (330 aa).

A KARI N-terminal Rossmann domain is found at Ala-2–Thr-182. Residues Tyr-25–Gln-28, Ser-51, Ser-53, and Asp-83–Gln-86 contribute to the NADP(+) site. His-108 is an active-site residue. Gly-134 lines the NADP(+) pocket. The KARI C-terminal knotted domain maps to Thr-183–Leu-328. Positions 191, 195, 227, and 231 each coordinate Mg(2+). Ser-252 contacts substrate.

Belongs to the ketol-acid reductoisomerase family. It depends on Mg(2+) as a cofactor.

It carries out the reaction (2R)-2,3-dihydroxy-3-methylbutanoate + NADP(+) = (2S)-2-acetolactate + NADPH + H(+). The enzyme catalyses (2R,3R)-2,3-dihydroxy-3-methylpentanoate + NADP(+) = (S)-2-ethyl-2-hydroxy-3-oxobutanoate + NADPH + H(+). It participates in amino-acid biosynthesis; L-isoleucine biosynthesis; L-isoleucine from 2-oxobutanoate: step 2/4. The protein operates within amino-acid biosynthesis; L-valine biosynthesis; L-valine from pyruvate: step 2/4. Involved in the biosynthesis of branched-chain amino acids (BCAA). Catalyzes an alkyl-migration followed by a ketol-acid reduction of (S)-2-acetolactate (S2AL) to yield (R)-2,3-dihydroxy-isovalerate. In the isomerase reaction, S2AL is rearranged via a Mg-dependent methyl migration to produce 3-hydroxy-3-methyl-2-ketobutyrate (HMKB). In the reductase reaction, this 2-ketoacid undergoes a metal-dependent reduction by NADPH to yield (R)-2,3-dihydroxy-isovalerate. In Microcystis aeruginosa (strain NIES-843 / IAM M-2473), this protein is Ketol-acid reductoisomerase (NADP(+)).